The chain runs to 303 residues: Acidic endochitinase WIN6.2B (303 aa).

The N-terminal stretch at 1 to 21 is a signal peptide; that stretch reads MSVWAFAFFSLFLSLSVRGSA. A Chitin-binding type-1 domain is found at 22-62; that stretch reads EQCGQQAGDALCPGGLCCSSYGWCGTTADYCGDGCQSQCDG. 4 disulfides stabilise this stretch: Cys24–Cys39, Cys33–Cys45, Cys38–Cys52, and Cys56–Cys60. A chitinase region spans residues 82–303; it reads DGYLSDIIPE…YGLLGLKDTM (222 aa). Glu150 serves as the catalytic Proton donor. Cys253 and Cys286 are oxidised to a cystine.

Belongs to the glycosyl hydrolase 19 family. Chitinase class I subfamily.

It carries out the reaction Random endo-hydrolysis of N-acetyl-beta-D-glucosaminide (1-&gt;4)-beta-linkages in chitin and chitodextrins.. Defense against chitin-containing fungal pathogens. The polypeptide is Acidic endochitinase WIN6.2B (Populus trichocarpa (Western balsam poplar)).